Here is a 65-residue protein sequence, read N- to C-terminus: Large ribosomal subunit protein uL29 (65 aa).

This sequence belongs to the universal ribosomal protein uL29 family.

In Bacteroides thetaiotaomicron (strain ATCC 29148 / DSM 2079 / JCM 5827 / CCUG 10774 / NCTC 10582 / VPI-5482 / E50), this protein is Large ribosomal subunit protein uL29.